Consider the following 352-residue polypeptide: Biotin synthase (352 aa).

Residues 44 to 262 (NRVQVSTLLS…LAVARIMMPK (219 aa)) enclose the Radical SAM core domain. [4Fe-4S] cluster is bound by residues C59, C63, and C66. [2Fe-2S] cluster contacts are provided by C103, C134, C194, and R266.

The protein belongs to the radical SAM superfamily. Biotin synthase family. Homodimer. [4Fe-4S] cluster is required as a cofactor. Requires [2Fe-2S] cluster as cofactor.

The catalysed reaction is (4R,5S)-dethiobiotin + (sulfur carrier)-SH + 2 reduced [2Fe-2S]-[ferredoxin] + 2 S-adenosyl-L-methionine = (sulfur carrier)-H + biotin + 2 5'-deoxyadenosine + 2 L-methionine + 2 oxidized [2Fe-2S]-[ferredoxin]. The protein operates within cofactor biosynthesis; biotin biosynthesis; biotin from 7,8-diaminononanoate: step 2/2. Catalyzes the conversion of dethiobiotin (DTB) to biotin by the insertion of a sulfur atom into dethiobiotin via a radical-based mechanism. The chain is Biotin synthase from Pseudomonas paraeruginosa (strain DSM 24068 / PA7) (Pseudomonas aeruginosa (strain PA7)).